The primary structure comprises 204 residues: dCTP deaminase, dUMP-forming (204 aa).

DCTP contacts are provided by residues 117–122 (RSSLGR), histidine 128, glycine 132, aspartate 135, 143–145 (TLE), glutamine 163, tyrosine 177, lysine 184, and glutamine 188. Glutamate 145 serves as the catalytic Proton donor/acceptor.

Homotrimer. Two trimers assemble into a hexamer by stacking on top of each other. The cofactor is Mg(2+).

It catalyses the reaction dCTP + 2 H2O = dUMP + NH4(+) + diphosphate. It participates in pyrimidine metabolism; dUMP biosynthesis; dUMP from dCTP: step 1/1. Inhibited by dTTP. Bifunctional enzyme that catalyzes both the deamination of dCTP to dUTP and the hydrolysis of dUTP to dUMP without releasing the toxic dUTP intermediate. It also acts as a dUTP diphosphatase with a lower affinity for dUTP than for dCTP. In Methanocaldococcus jannaschii (strain ATCC 43067 / DSM 2661 / JAL-1 / JCM 10045 / NBRC 100440) (Methanococcus jannaschii), this protein is dCTP deaminase, dUMP-forming.